A 67-amino-acid polypeptide reads, in one-letter code: Envelope small membrane protein (67 aa).

Residue G2 is the site of N-myristoyl glycine; by host attachment. The interval 2–15 (GLVWSLISNSIQTI) is endoplasmic reticulum retention signal. Residues 2-27 (GLVWSLISNSIQTIIADFAISVIDAA) lie on the Virion surface side of the membrane. A helical transmembrane segment spans residues 28–48 (LFFLMLLALAVVTVFLFWLIV). The Intravirion segment spans residues 49 to 67 (AIGRSLVARCSRGARYRPV).

This sequence belongs to the arteriviridae E protein family. In terms of assembly, homomultimer. Associates with itself into higher-order structures, including dimers, trimers and tetramers. Associates with the GP2b-GP3-GP4 complex. Post-translationally, myristoylated. In terms of processing, not glycosylated.

It localises to the virion membrane. The protein resides in the host endoplasmic reticulum membrane. The protein localises to the host Golgi apparatus membrane. It is found in the secreted. Minor envelope protein. May function as a viroporin in the virion envelope that facilitates uncoating of the virus in order to release the genomic RNA into the cytoplasm for subsequent replication. The sequence is that of Envelope small membrane protein (GP2a) from Equidae (horses).